The sequence spans 316 residues: Olfactory receptor 12D3 (316 aa).

The Extracellular portion of the chain corresponds to 1 to 23 (MENVTTMNEFLLLGLTGVQELQP). Asn3 is a glycosylation site (N-linked (GlcNAc...) asparagine). Residues 24–44 (FFFGIFLIIYLINLIGNGSIL) traverse the membrane as a helical segment. At 45–52 (VMVVLEPQ) the chain is on the cytoplasmic side. A helical membrane pass occupies residues 53-73 (LHSPMYFFLGNLSCLDISYSS). Residues 74–97 (VTLPKLLVNLVCSRRAISFLGCIT) are Extracellular-facing. A disulfide bridge links Cys95 with Cys187. The chain crosses the membrane as a helical span at residues 98-118 (QLHFFHFLGSTEAILLAIMAF). Topologically, residues 119 to 137 (DRFVAICNPLRYTVIMNPQ) are cytoplasmic. Residues 138–158 (VCILLAAAAWLISFFYALMHS) form a helical membrane-spanning segment. At 159 to 195 (VMTAHLSFCGSQKLNHFFYDVKPLLELACSDTLLNQW) the chain is on the extracellular side. Residues 196-215 (LLSIVTGSISMGAFFLTLLS) form a helical membrane-spanning segment. The Cytoplasmic portion of the chain corresponds to 216–236 (CFYVIGFLLFKNRSCRILHKA). The helical transmembrane segment at 237–257 (LSTCASHFMVVCLFYGPVGFT) threads the bilayer. The Extracellular segment spans residues 258–270 (YIRPASATSMIQD). Residues 271-291 (RIMAIMYSAVTPVLNPLIYTL) traverse the membrane as a helical segment. The Cytoplasmic portion of the chain corresponds to 292–316 (RNKEVMMALKKIFGRKLFKDWQQHH).

The protein belongs to the G-protein coupled receptor 1 family.

The protein localises to the cell membrane. Odorant receptor. The protein is Olfactory receptor 12D3 (OR12D3) of Homo sapiens (Human).